The following is a 294-amino-acid chain: Light-independent protochlorophyllide reductase iron-sulfur ATP-binding protein (294 aa).

Residues 10–15 and Lys-39 contribute to the ATP site; that span reads GIGKST. Ser-14 serves as a coordination point for Mg(2+). [4Fe-4S] cluster is bound by residues Cys-95 and Cys-129. 180-181 lines the ATP pocket; it reads NR.

It belongs to the NifH/BchL/ChlL family. In terms of assembly, homodimer. Protochlorophyllide reductase is composed of three subunits; ChlL, ChlN and ChlB. The cofactor is [4Fe-4S] cluster.

The protein localises to the plastid. Its subcellular location is the chloroplast. The enzyme catalyses chlorophyllide a + oxidized 2[4Fe-4S]-[ferredoxin] + 2 ADP + 2 phosphate = protochlorophyllide a + reduced 2[4Fe-4S]-[ferredoxin] + 2 ATP + 2 H2O. It participates in porphyrin-containing compound metabolism; chlorophyll biosynthesis (light-independent). In terms of biological role, component of the dark-operative protochlorophyllide reductase (DPOR) that uses Mg-ATP and reduced ferredoxin to reduce ring D of protochlorophyllide (Pchlide) to form chlorophyllide a (Chlide). This reaction is light-independent. The L component serves as a unique electron donor to the NB-component of the complex, and binds Mg-ATP. This chain is Light-independent protochlorophyllide reductase iron-sulfur ATP-binding protein, found in Pleurastrum terricola (Filamentous green alga).